We begin with the raw amino-acid sequence, 499 residues long: Probable cytochrome P450 cyp-35D1 (499 aa).

Cys-444 contributes to the heme binding site.

The protein belongs to the cytochrome P450 family. Heme is required as a cofactor. As to expression, expressed in hypodermis, intestine and vulva upon thiabendazole (TBZ) exposure.

Its function is as follows. Cytochromes P450 are a group of heme-thiolate monooxygenases. They oxidize a variety of structurally unrelated compounds, including steroids, fatty acids, and xenobiotics. Involved in the oxidative metabolism of thiabendazole (TBZ). Catalyzes the conversion of TBZ to its hydroxylated form. This Caenorhabditis elegans protein is Probable cytochrome P450 cyp-35D1.